Here is a 61-residue protein sequence, read N- to C-terminus: MRFTGIILILISMTLIDSFFEMKVEATGPQTTCQAAMCEAGCKGLGKSMESCQGDTCKCKA.

Residues 1–24 (MRFTGIILILISMTLIDSFFEMKV) form the signal peptide. Intrachain disulfides connect C33-C52, C38-C57, and C42-C59.

Expressed by the venom gland.

It localises to the secreted. Functionally, reversible blocker of both Kv1.3/KCNA3 potassium channels (high affinity) and Shaker B (mammalian Kv1.1 analog) potassium channels (very low affinity). The sequence is that of Potassium channel toxin alpha-KTx 18.1 from Tityus obscurus (Amazonian scorpion).